Here is a 163-residue protein sequence, read N- to C-terminus: NAD(P)H-quinone oxidoreductase subunit I, chloroplastic (163 aa).

4Fe-4S ferredoxin-type domains are found at residues 55–84 (GRIH…VDWK) and 95–124 (LNYS…MTEE). Residues Cys64, Cys67, Cys70, Cys74, Cys104, Cys107, Cys110, and Cys114 each coordinate [4Fe-4S] cluster.

This sequence belongs to the complex I 23 kDa subunit family. In terms of assembly, NDH is composed of at least 16 different subunits, 5 of which are encoded in the nucleus. [4Fe-4S] cluster is required as a cofactor.

The protein resides in the plastid. It localises to the chloroplast thylakoid membrane. The enzyme catalyses a plastoquinone + NADH + (n+1) H(+)(in) = a plastoquinol + NAD(+) + n H(+)(out). It catalyses the reaction a plastoquinone + NADPH + (n+1) H(+)(in) = a plastoquinol + NADP(+) + n H(+)(out). NDH shuttles electrons from NAD(P)H:plastoquinone, via FMN and iron-sulfur (Fe-S) centers, to quinones in the photosynthetic chain and possibly in a chloroplast respiratory chain. The immediate electron acceptor for the enzyme in this species is believed to be plastoquinone. Couples the redox reaction to proton translocation, and thus conserves the redox energy in a proton gradient. In Glycine max (Soybean), this protein is NAD(P)H-quinone oxidoreductase subunit I, chloroplastic.